We begin with the raw amino-acid sequence, 96 residues long: Small ribosomal subunit protein uS19 (96 aa).

It belongs to the universal ribosomal protein uS19 family.

Protein S19 forms a complex with S13 that binds strongly to the 16S ribosomal RNA. This is Small ribosomal subunit protein uS19 from Solibacter usitatus (strain Ellin6076).